Here is a 151-residue protein sequence, read N- to C-terminus: Cytochrome c-type biogenesis protein CcmE (151 aa).

Over 1–8 (MNPLRKKR) the chain is Cytoplasmic. Residues 9-29 (LLIILAILVGVGIAVGLALSA) traverse the membrane as a helical; Signal-anchor for type II membrane protein segment. Residues 30–151 (LKENINLFYT…QSAPTPAKEG (122 aa)) are Periplasmic-facing. Heme-binding residues include H124 and Y128. Positions 131–151 (PEVTKALKDSGQSAPTPAKEG) are disordered.

It belongs to the CcmE/CycJ family.

It localises to the cell inner membrane. In terms of biological role, heme chaperone required for the biogenesis of c-type cytochromes. Transiently binds heme delivered by CcmC and transfers the heme to apo-cytochromes in a process facilitated by CcmF and CcmH. This Pseudomonas fluorescens (strain ATCC BAA-477 / NRRL B-23932 / Pf-5) protein is Cytochrome c-type biogenesis protein CcmE.